A 289-amino-acid chain; its full sequence is Homoserine kinase (289 aa).

Residue 79 to 89 participates in ATP binding; the sequence is PLARGLGSSSS.

It belongs to the GHMP kinase family. Homoserine kinase subfamily.

It localises to the cytoplasm. The enzyme catalyses L-homoserine + ATP = O-phospho-L-homoserine + ADP + H(+). Its pathway is amino-acid biosynthesis; L-threonine biosynthesis; L-threonine from L-aspartate: step 4/5. In terms of biological role, catalyzes the ATP-dependent phosphorylation of L-homoserine to L-homoserine phosphate. This Streptococcus pneumoniae serotype 2 (strain D39 / NCTC 7466) protein is Homoserine kinase.